Here is a 440-residue protein sequence, read N- to C-terminus: tRNA (guanine(37)-N(1))-methyltransferase (440 aa).

Residues His217, 255–256 (DL), 283–284 (DG), and Asn315 each bind S-adenosyl-L-methionine.

This sequence belongs to the class I-like SAM-binding methyltransferase superfamily. TRM5/TYW2 family. In terms of assembly, monomer.

Its subcellular location is the mitochondrion matrix. It is found in the nucleus. It localises to the cytoplasm. The enzyme catalyses guanosine(37) in tRNA + S-adenosyl-L-methionine = N(1)-methylguanosine(37) in tRNA + S-adenosyl-L-homocysteine + H(+). In terms of biological role, specifically methylates the N1 position of guanosine-37 in various cytoplasmic and mitochondrial tRNAs. Methylation is not dependent on the nature of the nucleoside 5' of the target nucleoside. This is the first step in the biosynthesis of wybutosine (yW), a modified base adjacent to the anticodon of tRNAs and required for accurate decoding. This chain is tRNA (guanine(37)-N(1))-methyltransferase, found in Drosophila pseudoobscura pseudoobscura (Fruit fly).